A 130-amino-acid chain; its full sequence is Small ribosomal subunit protein uS11 (130 aa).

Residues 1 to 21 are disordered; that stretch reads MAPQSKRSGGRKQKKHVPNGV. Residues 8–17 are compositionally biased toward basic residues; it reads SGGRKQKKHV.

The protein belongs to the universal ribosomal protein uS11 family. Part of the 30S ribosomal subunit. Interacts with proteins S7 and S18. Binds to IF-3.

In terms of biological role, located on the platform of the 30S subunit, it bridges several disparate RNA helices of the 16S rRNA. Forms part of the Shine-Dalgarno cleft in the 70S ribosome. The sequence is that of Small ribosomal subunit protein uS11 from Acaryochloris marina (strain MBIC 11017).